Here is a 231-residue protein sequence, read N- to C-terminus: S-norcoclaurine synthase 1 (231 aa).

A dopamine-binding site is contributed by 107–109; that stretch reads YKE. Residue K121 is the Proton donor of the active site. D140 is a (4-hydroxyphenyl)acetaldehyde binding site. The helical transmembrane segment at 210 to 230 threads the bilayer; it reads LLLCLIICLVIAGGMFVAGVP.

The protein belongs to the BetVI family. In terms of tissue distribution, detected in roots, stems, leaves, flower buds and germinating seeds.

The protein resides in the membrane. The catalysed reaction is (4-hydroxyphenyl)acetaldehyde + dopamine = (S)-norcoclaurine + H2O. The protein operates within alkaloid biosynthesis; (S)-reticuline biosynthesis. With respect to regulation, activity doubles within 5 hours of elicitor treatment and continues to increase for at least 80 hours. Involved in the biosynthesis of (S)-coclaurine, the common precursor of all benzylisoquinoline alkaloids such as morphine, sanguinarine, codeine or papaverine. Condenses dopamine and 4-hydroxyphenylacetaldehyde. This chain is S-norcoclaurine synthase 1, found in Papaver somniferum (Opium poppy).